Reading from the N-terminus, the 205-residue chain is Holliday junction branch migration complex subunit RuvA (205 aa).

The tract at residues 1 to 64 (MIAHLRGELV…EDALTLYGFL (64 aa)) is domain I. A domain II region spans residues 65 to 143 (TQAEYDLFEL…AVPAGGGGVP (79 aa)). Residues 144–153 (DGLPVAVAPA) are flexible linker. Residues 153 to 205 (AGDAWAEASEALIALGYSRGEAAAALARVRAEAGEAPSVETLVRLALKQLYRG) form a domain III region.

It belongs to the RuvA family. In terms of assembly, homotetramer. Forms an RuvA(8)-RuvB(12)-Holliday junction (HJ) complex. HJ DNA is sandwiched between 2 RuvA tetramers; dsDNA enters through RuvA and exits via RuvB. An RuvB hexamer assembles on each DNA strand where it exits the tetramer. Each RuvB hexamer is contacted by two RuvA subunits (via domain III) on 2 adjacent RuvB subunits; this complex drives branch migration. In the full resolvosome a probable DNA-RuvA(4)-RuvB(12)-RuvC(2) complex forms which resolves the HJ.

The protein resides in the cytoplasm. The RuvA-RuvB-RuvC complex processes Holliday junction (HJ) DNA during genetic recombination and DNA repair, while the RuvA-RuvB complex plays an important role in the rescue of blocked DNA replication forks via replication fork reversal (RFR). RuvA specifically binds to HJ cruciform DNA, conferring on it an open structure. The RuvB hexamer acts as an ATP-dependent pump, pulling dsDNA into and through the RuvAB complex. HJ branch migration allows RuvC to scan DNA until it finds its consensus sequence, where it cleaves and resolves the cruciform DNA. The polypeptide is Holliday junction branch migration complex subunit RuvA (Symbiobacterium thermophilum (strain DSM 24528 / JCM 14929 / IAM 14863 / T)).